Consider the following 239-residue polypeptide: Pyridoxine 5'-phosphate synthase (239 aa).

Asn7 contributes to the 3-amino-2-oxopropyl phosphate binding site. 9 to 10 contributes to the 1-deoxy-D-xylulose 5-phosphate binding site; the sequence is DH. Arg18 lines the 3-amino-2-oxopropyl phosphate pocket. Catalysis depends on His43, which acts as the Proton acceptor. 1-deoxy-D-xylulose 5-phosphate contacts are provided by Arg45 and His50. The active-site Proton acceptor is Glu70. Thr100 is a binding site for 1-deoxy-D-xylulose 5-phosphate. His191 functions as the Proton donor in the catalytic mechanism. Residues Gly192 and 213 to 214 contribute to the 3-amino-2-oxopropyl phosphate site; that span reads GH.

Belongs to the PNP synthase family. As to quaternary structure, homooctamer; tetramer of dimers.

The protein localises to the cytoplasm. The enzyme catalyses 3-amino-2-oxopropyl phosphate + 1-deoxy-D-xylulose 5-phosphate = pyridoxine 5'-phosphate + phosphate + 2 H2O + H(+). It functions in the pathway cofactor biosynthesis; pyridoxine 5'-phosphate biosynthesis; pyridoxine 5'-phosphate from D-erythrose 4-phosphate: step 5/5. In terms of biological role, catalyzes the complicated ring closure reaction between the two acyclic compounds 1-deoxy-D-xylulose-5-phosphate (DXP) and 3-amino-2-oxopropyl phosphate (1-amino-acetone-3-phosphate or AAP) to form pyridoxine 5'-phosphate (PNP) and inorganic phosphate. In Nostoc sp. (strain PCC 7120 / SAG 25.82 / UTEX 2576), this protein is Pyridoxine 5'-phosphate synthase.